Reading from the N-terminus, the 394-residue chain is Argininosuccinate synthase (394 aa).

Residues 7–15 (AYSGGLDTS) and Ala-34 each bind ATP. 2 residues coordinate L-citrulline: Tyr-85 and Ser-90. Gly-115 serves as a coordination point for ATP. L-aspartate is bound by residues Thr-117, Asn-121, and Asp-122. Asn-121 serves as a coordination point for L-citrulline. Residues Arg-125, Ser-176, Ser-185, Glu-261, and Tyr-273 each coordinate L-citrulline.

It belongs to the argininosuccinate synthase family. Type 1 subfamily. In terms of assembly, homotetramer.

The protein resides in the cytoplasm. It carries out the reaction L-citrulline + L-aspartate + ATP = 2-(N(omega)-L-arginino)succinate + AMP + diphosphate + H(+). The protein operates within amino-acid biosynthesis; L-arginine biosynthesis; L-arginine from L-ornithine and carbamoyl phosphate: step 2/3. The polypeptide is Argininosuccinate synthase (Ehrlichia ruminantium (strain Welgevonden)).